The sequence spans 482 residues: tRNA sulfurtransferase (482 aa).

A THUMP domain is found at 61–165 (LAIRDALTRI…DDRLLLIKGR (105 aa)). ATP-binding positions include 183–184 (LI), K265, G287, and Q296. A disulfide bridge links C344 with C456. The 79-residue stretch at 404 to 482 (FGPNDVILDI…GFANVKVYRP (79 aa)) folds into the Rhodanese domain. Residue C456 is the Cysteine persulfide intermediate of the active site.

Belongs to the ThiI family.

Its subcellular location is the cytoplasm. It carries out the reaction [ThiI sulfur-carrier protein]-S-sulfanyl-L-cysteine + a uridine in tRNA + 2 reduced [2Fe-2S]-[ferredoxin] + ATP + H(+) = [ThiI sulfur-carrier protein]-L-cysteine + a 4-thiouridine in tRNA + 2 oxidized [2Fe-2S]-[ferredoxin] + AMP + diphosphate. The enzyme catalyses [ThiS sulfur-carrier protein]-C-terminal Gly-Gly-AMP + S-sulfanyl-L-cysteinyl-[cysteine desulfurase] + AH2 = [ThiS sulfur-carrier protein]-C-terminal-Gly-aminoethanethioate + L-cysteinyl-[cysteine desulfurase] + A + AMP + 2 H(+). It participates in cofactor biosynthesis; thiamine diphosphate biosynthesis. Catalyzes the ATP-dependent transfer of a sulfur to tRNA to produce 4-thiouridine in position 8 of tRNAs, which functions as a near-UV photosensor. Also catalyzes the transfer of sulfur to the sulfur carrier protein ThiS, forming ThiS-thiocarboxylate. This is a step in the synthesis of thiazole, in the thiamine biosynthesis pathway. The sulfur is donated as persulfide by IscS. The chain is tRNA sulfurtransferase from Salmonella heidelberg (strain SL476).